Consider the following 906-residue polypeptide: Coatomer subunit beta' (906 aa).

WD repeat units lie at residues 13–52 (ARSDRVKSVDLHPTEPWMLASLYNGSVCVWNHETQTLVKT), 55–94 (VCDLPVRAAKFVARKNWVVTGADDMQIRVFNYNTLERVHM), 97–136 (AHSDYIRCIAVHPTQPFILTSSDDMLIKLWDWDKKWSCSQ), 140–180 (GHTH…PNFT), 183–224 (GHEK…CVQT), and 227–266 (GHAQNVSCASFHPELPIIITGSEDGTVRIWHSSTYRLEST). Lysine 627 is subject to N6-acetyllysine. The disordered stretch occupies residues 837-870 (EEGKDFQPSRSTAQQELDGKPASPTPVIVASHTA). Residue serine 859 is modified to Phosphoserine. Threonine 861 is modified (phosphothreonine). A coiled-coil region spans residues 866–891 (ASHTANKEEKSLLELEVDLDNLELED).

This sequence belongs to the WD repeat COPB2 family. In terms of assembly, oligomeric complex that consists of at least the alpha, beta, beta', gamma, delta, epsilon and zeta subunits. Probably interacts with PEX11A. Interacts with SCYL1. Interacts with JAGN1.

The protein resides in the cytoplasm. The protein localises to the cytosol. It localises to the golgi apparatus membrane. Its subcellular location is the cytoplasmic vesicle. It is found in the COPI-coated vesicle membrane. The coatomer is a cytosolic protein complex that binds to dilysine motifs and reversibly associates with Golgi non-clathrin-coated vesicles, which further mediate biosynthetic protein transport from the ER, via the Golgi up to the trans Golgi network. Coatomer complex is required for budding from Golgi membranes, and is essential for the retrograde Golgi-to-ER transport of dilysine-tagged proteins. In mammals, the coatomer can only be recruited by membranes associated to ADP-ribosylation factors (ARFs), which are small GTP-binding proteins; the complex also influences the Golgi structural integrity, as well as the processing, activity, and endocytic recycling of LDL receptors. Functionally, this coatomer complex protein, essential for Golgi budding and vesicular trafficking, is a selective binding protein (RACK) for protein kinase C, epsilon type. It binds to Golgi membranes in a GTP-dependent manner. The chain is Coatomer subunit beta' (COPB2) from Homo sapiens (Human).